A 133-amino-acid polypeptide reads, in one-letter code: P2Y purinoceptor 2 (133 aa).

Topologically, residues 1 to 26 (ISVHRCLGVLRPLHSLRWGRARYARR) are cytoplasmic. Residues 27-47 (VAFAVWVLVLYCQAPVLYFVT) traverse the membrane as a helical segment. The Extracellular portion of the chain corresponds to 48 to 74 (TSTRSSRIICHDTSARELFSHFVAYSS). A helical membrane pass occupies residues 75–95 (VMLSLLFAAPFAVILVCYVLM). Residues 96–116 (ARRLLKPAYGTSGGLPRAKRK) lie on the Cytoplasmic side of the membrane. Residues 117–133 (SVRTIAIVLTVFVLCFL) traverse the membrane as a helical segment.

This sequence belongs to the G-protein coupled receptor 1 family.

The protein resides in the cell membrane. In terms of biological role, receptor for ATP and UTP coupled to G-proteins that activate a phosphatidylinositol-calcium second messenger system. This chain is P2Y purinoceptor 2 (P2RY2), found in Bos taurus (Bovine).